The sequence spans 334 residues: tRNA U34 carboxymethyltransferase (334 aa).

Residues K91, W105, K110, G130, 152-154 (DPT), 181-182 (IE), M196, Y200, and R315 contribute to the carboxy-S-adenosyl-L-methionine site.

It belongs to the class I-like SAM-binding methyltransferase superfamily. CmoB family. Homotetramer.

The enzyme catalyses carboxy-S-adenosyl-L-methionine + 5-hydroxyuridine(34) in tRNA = 5-carboxymethoxyuridine(34) in tRNA + S-adenosyl-L-homocysteine + H(+). In terms of biological role, catalyzes carboxymethyl transfer from carboxy-S-adenosyl-L-methionine (Cx-SAM) to 5-hydroxyuridine (ho5U) to form 5-carboxymethoxyuridine (cmo5U) at position 34 in tRNAs. This chain is tRNA U34 carboxymethyltransferase, found in Klebsiella pneumoniae subsp. pneumoniae (strain ATCC 700721 / MGH 78578).